A 399-amino-acid chain; its full sequence is Methylmalonic aciduria type A homolog, mitochondrial (399 aa).

A mitochondrion-targeting transit peptide spans 1–15; the sequence is MVVRSLLRVSRLTSA. Residues 131–139, aspartate 274, and 310–312 contribute to the GTP site; these read GSPGVGKSS and SIM.

It belongs to the SIMIBI class G3E GTPase family. ArgK/MeaB subfamily.

Its subcellular location is the mitochondrion. Its function is as follows. May have GTPase activity. May also bind and hydrolyze ATP. May function as chaperone. Likely to have a role in propionyl-CoA and adenosylcobalamin metabolism. This chain is Methylmalonic aciduria type A homolog, mitochondrial (mmaa-1), found in Caenorhabditis elegans.